The following is a 770-amino-acid chain: MLPGLALVLLAAWTARALEVPTDGNAGLLAEPQVAMFCGKLNMHMNVQNGKWESDPSGTKTCIGTKEGILQYCQEVYPELQITNVVEANQPVTIQNWCKRSRKQCKTHTHIVIPYRCLVGEFVSDALLVPDKCKFLHQERMDVCETHLHWHTVAKETCSEKSTNLHDYGMLLPCGIDKFRGVEFVCCPLAEESDNIDSADAEEDDSDVWWGGADTDYADGSEDKVVEVAEEEEVADVEEEEAEDDEDDEDGDEVEEEAEEPYEEATERTTSIATTTTTTTESVEEVVREVCSEQAETGPCRAMISRWYFDVTEGKCAPFFYGGCGGNRNNFDTEEYCMAVCGSVMSQSLLKTTQEHLPQDPVKLPTTAASTPDAVDKYLETPGDENEHAHFQKAKERLEAKHRERMSQVMREWEEAERQAKNLPKADKKAVIQHFQEKVESLEQEAANERQQLVETHMARVEAMLNDRRRLALENYITALQAVPPRPRHVFNMLKKYVRAEQKDRQHTLKHFEHVRMVDPKKAAQIRSQVMTHLRVIYERMNQSLSLLYNVPAVAEEIQDEVDELLQKEQNYSDDVLANMISEPRISYGNDALMPSLTETKTTVELLPVNGEFSLDDLQPWHPFGVDSVPANTENEVEPVDARPAADRGLTTRPGSGLTNIKTEEISEVKMDAEFRHDSGYEVHHQKLVFFAEDVGSNKGAIIGLMVGGVVIATVIVITLVMLKKKQYTSIHHGVVEVDAAVTPEERHLSKMQQNGYENPTYKFFEQMQN.

Positions methionine 1–alanine 17 are cleaved as a signal peptide. Residues leucine 18 to alanine 701 are Extracellular-facing. The interval leucine 28 to valine 123 is GFLD subdomain. Positions leucine 28–leucine 189 constitute an E1 domain. Disulfide bonds link cysteine 38/cysteine 62, cysteine 73/cysteine 117, cysteine 98/cysteine 105, cysteine 133/cysteine 187, cysteine 144/cysteine 174, and cysteine 158/cysteine 186. Residue asparagine 96–histidine 110 participates in heparin binding. Positions aspartate 131–leucine 189 are cuBD subdomain. Residues phenylalanine 135 to lysine 155 are copper-binding. Histidine 147, histidine 151, and tyrosine 168 together coordinate Cu(2+). Residues glycine 181 to proline 188 are zinc-binding. The Zn(2+) site is built by glutamate 183, cysteine 186, and cysteine 187. The span at isoleucine 196 to aspartate 207 shows a compositional bias: acidic residues. The interval isoleucine 196–glutamate 284 is disordered. Serine 198 is subject to Phosphoserine; by CK2. At serine 206 the chain carries Phosphoserine; by CK1. Sulfotyrosine is present on residues tyrosine 217 and tyrosine 262. A compositionally biased stretch (acidic residues) spans valine 228 to glutamate 264. The span at arginine 268–glutamate 281 shows a compositional bias: low complexity. Intrachain disulfides connect cysteine 291-cysteine 341, cysteine 300-cysteine 324, and cysteine 316-cysteine 337. One can recognise a BPTI/Kunitz inhibitor domain in the interval cysteine 291 to cysteine 341. Position 336 is a sulfotyrosine (tyrosine 336). The OX-2 motif lies at valine 344 to proline 365. The E2 domain occupies alanine 374–leucine 565. Residues phenylalanine 391–leucine 423 are heparin-binding. Serine 441 carries the post-translational modification Phosphoserine. The interval phenylalanine 491–lysine 522 is heparin-binding. Phosphotyrosine is present on tyrosine 497. Positions alanine 523–arginine 540 are collagen-binding. 2 N-linked (GlcNAc...) asparagine glycosylation sites follow: asparagine 542 and asparagine 571. Cu(2+) contacts are provided by histidine 677, tyrosine 681, histidine 684, and histidine 685. Zn(2+) contacts are provided by histidine 677, tyrosine 681, histidine 684, and histidine 685. The interaction with PSEN1 stretch occupies residues valine 695–methionine 722. A helical transmembrane segment spans residues isoleucine 702 to methionine 722. The Cytoplasmic segment spans residues leucine 723–asparagine 770. A Basolateral sorting signal motif is present at residues lysine 724 to glycine 734. Phosphothreonine is present on threonine 729. At serine 730 the chain carries Phosphoserine; by APP-kinase I. The tract at residues histidine 732–lysine 751 is interaction with G(o)-alpha. The residue at position 743 (threonine 743) is a Phosphothreonine; by CDK5 and MAPK10. The segment at glycine 756 to asparagine 770 is required for the interaction with KIF5B and for anterograde transport in axons. At tyrosine 757 the chain carries Phosphotyrosine; by ABL1. Positions tyrosine 757–tyrosine 762 match the YENPXY motif; contains endocytosis signal motif. Lysine 763 is covalently cross-linked (Glycyl lysine isopeptide (Lys-Gly) (interchain with G-Cter in ubiquitin)).

Belongs to the APP family. Binds, via its C-terminus, to the PID domain of several cytoplasmic proteins, including APBB family members, the APBA family, MAPK8IP1, SHC1 and NUMB and DAB1. Binding to DAB1 inhibits its serine phosphorylation. Interacts (via NPXY motif) with DAB2 (via PID domain); the interaction is impaired by tyrosine phosphorylation of the NPXY motif. Also interacts with GPCR-like protein BPP, APPBP1, IB1, KNS2 (via its TPR domains), APPBP2 (via BaSS) and DDB1. In vitro, it binds MAPT via the MT-binding domains. Associates with microtubules in the presence of ATP and in a kinesin-dependent manner. Interacts, through a C-terminal domain, with GNAO1. Amyloid-beta protein 42 binds CHRNA7 in hippocampal neurons. Amyloid-beta associates with HADH2. Interacts with CPEB1, ANKS1B and AGER. Interacts with ITM2B. Interacts with ITM2C. Interacts with IDE. Can form homodimers; dimerization is enhanced in the presence of Cu(2+) ions. Can form homodimers; this is promoted by heparin binding. Amyloid-beta protein 40 interacts with S100A9. CTF-alpha product of APP interacts with GSAP. Interacts with SORL1 (via N-terminal ectodomain); this interaction retains APP in the trans-Golgi network and reduces processing into soluble APP-alpha and amyloid-beta peptides. The C99 fragment also interacts with SORL1. Interacts with PLD3. Interacts with VDAC1. Interacts with NSG1; could regulate APP processing. Amyloid-beta protein 42 interacts with FPR2. Interacts (via transmembrane region) with PSEN1; the interaction is direct. Interacts with LRRK2. Interacts (via cytoplasmic domain) with KIF5B. Interacts (via C-terminus) with APBB2/FE65L1 (via C-terminus). Interacts (via intracellular domain) with APBB3. Post-translationally, proteolytically processed under normal cellular conditions. Cleavage either by alpha-secretase, beta-secretase or theta-secretase leads to generation and extracellular release of soluble APP peptides, S-APP-alpha and S-APP-beta, and the retention of corresponding membrane-anchored C-terminal fragments, C80, C83 and C99. Subsequent processing of C80 and C83 by gamma-secretase yields P3 peptides. This is the major secretory pathway and is non-amyloidogenic. Alternatively, presenilin/nicastrin-mediated gamma-secretase processing of C99 releases the amyloid-beta proteins, amyloid-beta protein 40 and amyloid-beta protein 42, major components of amyloid plaques, and the cytotoxic C-terminal fragments, gamma-CTF(50), gamma-CTF(57) and gamma-CTF(59). PSEN1 cleavage is more efficient with C83 than with C99 as substrate (in vitro). Amyloid-beta protein 40 and Amyloid-beta protein 42 are cleaved by ACE. Many other minor amyloid-beta peptides, amyloid-beta 1-X peptides, are found in cerebral spinal fluid (CSF) including the amyloid-beta X-15 peptides, produced from the cleavage by alpha-secretase. Proteolytically cleaved by caspases during neuronal apoptosis. Cleavage at Asp-739 by either caspase-3, -8 or -9 results in the production of the neurotoxic C31 peptide and the increased production of amyloid-beta peptides. In terms of processing, N- and O-glycosylated. Post-translationally, phosphorylation in the C-terminal on tyrosine, threonine and serine residues is neuron-specific. Phosphorylation can affect APP processing, neuronal differentiation and interaction with other proteins. Phosphorylated on Thr-743 in neuronal cells by Cdc5 kinase and Mapk10, in dividing cells by Cdc2 kinase in a cell-cycle dependent manner with maximal levels at the G2/M phase and, in vitro, by GSK-3-beta. The Thr-743 phosphorylated form causes a conformational change which reduces binding of Fe65 family members. In dopaminergic (DA) neurons, phosphorylation on Thr-743 by LRKK2 promotes the production and the nuclear translocation of the APP intracellular domain (AICD) which induces DA neuron apoptosis. Phosphorylation on Tyr-757 is required for SHC binding. Phosphorylated in the extracellular domain by casein kinases on both soluble and membrane-bound APP. This phosphorylation is inhibited by heparin. Extracellular binding and reduction of copper, results in a corresponding oxidation of Cys-144 and Cys-158, and the formation of a disulfide bond. In terms of processing, trophic-factor deprivation triggers the cleavage of surface APP by beta-secretase to release sAPP-beta which is further cleaved to release an N-terminal fragment of APP (N-APP). Post-translationally, amyloid-beta peptides are degraded by IDE. Sulfated on tyrosine residues.

The protein resides in the cell membrane. The protein localises to the membrane. It is found in the perikaryon. Its subcellular location is the cell projection. It localises to the growth cone. The protein resides in the clathrin-coated pit. The protein localises to the early endosome. It is found in the cytoplasmic vesicle. Its subcellular location is the endoplasmic reticulum. It localises to the golgi apparatus. The protein resides in the secreted. The protein localises to the cell surface. It is found in the nucleus. Its subcellular location is the cytoplasm. Functionally, functions as a cell surface receptor and performs physiological functions on the surface of neurons relevant to neurite growth, neuronal adhesion and axonogenesis. Interaction between APP molecules on neighboring cells promotes synaptogenesis. Involved in cell mobility and transcription regulation through protein-protein interactions. Can promote transcription activation through binding to APBB1-KAT5 and inhibit Notch signaling through interaction with Numb. Couples to apoptosis-inducing pathways such as those mediated by G(o) and JIP. Inhibits G(o)-alpha ATPase activity. Acts as a kinesin I membrane receptor, mediating the axonal transport of beta-secretase and presenilin 1. By acting as a kinesin I membrane receptor, plays a role in axonal anterograde transport of cargo towards synapses in axons. May be involved in copper homeostasis/oxidative stress through copper ion reduction. In vitro, copper-metallated APP induces neuronal death directly or is potentiated through Cu(2+)-mediated low-density lipoprotein oxidation. Can regulate neurite outgrowth through binding to components of the extracellular matrix such as heparin and collagen I and IV. Induces a AGER-dependent pathway that involves activation of p38 MAPK, resulting in internalization of amyloid-beta peptide and mitochondrial dysfunction in cultured cortical neurons. Provides Cu(2+) ions for GPC1 which are required for release of nitric oxide (NO) and subsequent degradation of the heparan sulfate chains on GPC1. Amyloid-beta peptides are lipophilic metal chelators with metal-reducing activity. Binds transient metals such as copper, zinc and iron. Its function is as follows. The gamma-CTF peptides as well as the caspase-cleaved peptides, including C31, are potent enhancers of neuronal apoptosis. This is Amyloid-beta precursor protein from Sus scrofa (Pig).